The following is a 302-amino-acid chain: Chloramphenicol resistance protein (302 aa).

The protein localises to the cell membrane. This protein is thought to be a membrane-associated barrier of drug uptake. This chain is Chloramphenicol resistance protein (cml), found in Escherichia coli.